The primary structure comprises 124 residues: Putative membrane protein insertion efficiency factor (124 aa).

Over residues 1–12 (MCPQPHADHAIT) the composition is skewed to basic and acidic residues. The tract at residues 1 to 26 (MCPQPHADHAITRGDTGAAGGRNWSG) is disordered.

Belongs to the UPF0161 family.

Its subcellular location is the cell inner membrane. Functionally, could be involved in insertion of integral membrane proteins into the membrane. The polypeptide is Putative membrane protein insertion efficiency factor (Rhizobium meliloti (strain 1021) (Ensifer meliloti)).